A 409-amino-acid chain; its full sequence is tRNA(Met) cytidine acetate ligase (409 aa).

ATP is bound by residues 7-20, Gly102, Asn169, and Arg194; that span reads VVEY…HLYH.

The protein belongs to the TmcAL family.

The protein localises to the cytoplasm. The enzyme catalyses cytidine(34) in elongator tRNA(Met) + acetate + ATP = N(4)-acetylcytidine(34) in elongator tRNA(Met) + AMP + diphosphate. In terms of biological role, catalyzes the formation of N(4)-acetylcytidine (ac(4)C) at the wobble position of elongator tRNA(Met), using acetate and ATP as substrates. First activates an acetate ion to form acetyladenylate (Ac-AMP) and then transfers the acetyl group to tRNA to form ac(4)C34. This chain is tRNA(Met) cytidine acetate ligase, found in Clostridium botulinum (strain ATCC 19397 / Type A).